The sequence spans 577 residues: Protein NRT1/ PTR FAMILY 6.2 (577 aa).

Transmembrane regions (helical) follow at residues 28-48 (WITA…TMGI), 74-94 (FMGT…SFLG), 96-116 (FKTI…LAVA), 134-154 (IPAT…IALG), 183-203 (FFFN…VTVL), 214-234 (WAYG…LCGT), 332-352 (LLPI…MITF), 369-389 (IPAG…LAVY), 409-429 (LQRI…AALV), 447-467 (ISVF…AFIY), 488-508 (GLFL…VSIV), and 535-555 (WLLV…ALWF).

The protein belongs to the major facilitator superfamily. Proton-dependent oligopeptide transporter (POT/PTR) (TC 2.A.17) family. As to expression, expressed in shoots, leaves, flowers and siliques. Expressed in leaf petiole.

Its subcellular location is the membrane. Its function is as follows. Low-affinity proton-dependent nitrate transporter. Not involved in dipeptides transport. The sequence is that of Protein NRT1/ PTR FAMILY 6.2 (NPF6.2) from Arabidopsis thaliana (Mouse-ear cress).